A 52-amino-acid polypeptide reads, in one-letter code: Gastrin/cholecystokinin-like peptide (52 aa).

This sequence belongs to the gastrin/cholecystokinin family.

The protein localises to the secreted. In terms of biological role, may control digestion processes. The chain is Gastrin/cholecystokinin-like peptide from Trachemys scripta (Red-eared slider turtle).